Here is a 336-residue protein sequence, read N- to C-terminus: tRNA N6-adenosine threonylcarbamoyltransferase (336 aa).

Fe cation-binding residues include H111 and H115. Residues 134 to 138, D167, G180, and N270 each bind substrate; that span reads LVSGG. Residue D298 participates in Fe cation binding.

The protein belongs to the KAE1 / TsaD family. It depends on Fe(2+) as a cofactor.

The protein localises to the cytoplasm. The enzyme catalyses L-threonylcarbamoyladenylate + adenosine(37) in tRNA = N(6)-L-threonylcarbamoyladenosine(37) in tRNA + AMP + H(+). In terms of biological role, required for the formation of a threonylcarbamoyl group on adenosine at position 37 (t(6)A37) in tRNAs that read codons beginning with adenine. Is involved in the transfer of the threonylcarbamoyl moiety of threonylcarbamoyl-AMP (TC-AMP) to the N6 group of A37, together with TsaE and TsaB. TsaD likely plays a direct catalytic role in this reaction. The polypeptide is tRNA N6-adenosine threonylcarbamoyltransferase (Acinetobacter baumannii (strain SDF)).